A 1667-amino-acid chain; its full sequence is Androglobin (1667 aa).

Residues Met-1–Val-11 show a composition bias toward basic residues. 3 disordered regions span residues Met-1–Phe-45, Ser-347–Leu-387, and Gly-540–Ala-566. Residues Lys-70–Gln-411 enclose the Calpain catalytic domain. A compositionally biased stretch (basic and acidic residues) spans Ala-353–Lys-384. The segment covering Thr-554–Ala-566 has biased composition (polar residues). In terms of domain architecture, Globin; C-terminal part spans His-763–Asp-890. Positions 792 and 824 each coordinate heme b. In terms of domain architecture, IQ spans Glu-906–Glu-935. Residues Asn-936–Ser-968 enclose the Globin; N-terminal part domain. Disordered regions lie at residues Ile-1297 to Asp-1355 and Thr-1420 to Thr-1522. The segment covering Ser-1301–Val-1315 has biased composition (polar residues). Composition is skewed to basic and acidic residues over residues Glu-1325–Pro-1340 and Thr-1433–Asn-1450. Polar residues predominate over residues Ser-1451–Gly-1468. A compositionally biased stretch (low complexity) spans Ser-1487–Pro-1498. A compositionally biased stretch (basic and acidic residues) spans Gly-1499 to Asn-1511. Residues Ile-1512–Thr-1522 are compositionally biased toward polar residues. Residues Gln-1588–Glu-1629 adopt a coiled-coil conformation. Positions Lys-1646 to Lys-1667 are disordered.

It in the central section; belongs to the globin family. The protein in the N-terminal section; belongs to the peptidase C2 family. As to quaternary structure, interacts with septin SEPT10; contributes to in vitro proteolytic cleavage of SEPT10 in a calmodulin-dependent manner. Interacts with CFAP69. Interacts with SPEF2. May interact with calmodulin.

It localises to the cell projection. The protein localises to the cilium. It is found in the flagellum. Its function is as follows. Probable chimeric globin with a bis-histidyl six-coordinate heme-iron atom through which it could bind dioxygen, carbon monoxide and nitric oxide. Required for sperm flagellum formation and maturation of elongating spermatids, thus playing an essential role in male fertility. This is Androglobin from Homo sapiens (Human).